The sequence spans 253 residues: uncharacterized protein (253 aa).

Polar residues predominate over residues 175–184 (NPTQTSPGKP). Positions 175 to 253 (NPTQTSPGKP…ATENEDRLPS (79 aa)) are disordered. The residue at position 180 (Ser180) is a Phosphoserine. Composition is skewed to low complexity over residues 185-196 (STSESSQTDTST) and 203-214 (TPTTTRASSYTT). The segment covering 215-242 (LVSTSNQVSNEAEASAVETSANQAQNTE) has biased composition (polar residues).

The protein belongs to the TRAPP small subunits family. BET3 subfamily.

This is an uncharacterized protein from Schizosaccharomyces pombe (strain 972 / ATCC 24843) (Fission yeast).